The chain runs to 284 residues: Gigasin-3a (284 aa).

The interval 202 to 284 is disordered; that stretch reads GLDNPLPNPR…FKAGRKNNRN (83 aa). Residues 223–245 show a composition bias toward low complexity; it reads SSPLPESTPKSSTKTSSASPIKS. The segment covering 246–257 has biased composition (basic residues); sequence RQGKKLRGKKQN. The span at 258-267 shows a compositional bias: polar residues; the sequence is KTGNTRFTYR. A compositionally biased stretch (basic residues) spans 268-284; sequence NNKRNIKFKAGRKNNRN.

In terms of tissue distribution, component of the organic matrix of calcified shell layers.

The chain is Gigasin-3a from Magallana gigas (Pacific oyster).